Reading from the N-terminus, the 326-residue chain is PDZ domain-containing protein MAGIX (326 aa).

Residues 1–32 are disordered; that stretch reads MDSHAGNTADPRGSRRGVGLQGSGSPRARQLL. The PDZ domain occupies 128 to 212; that stretch reads SVELVRGPAG…RLCLVLQRPQ (85 aa). Residues 214–267 are disordered; that stretch reads MNGSRSKEVGGGHQKTDRIPDPRGGRMMESRGTISPVHHRPKTRTGPGPSPESV. The segment covering 218–242 has biased composition (basic and acidic residues); it reads RSKEVGGGHQKTDRIPDPRGGRMME. Residue serine 263 is modified to Phosphoserine.

This Rattus norvegicus (Rat) protein is PDZ domain-containing protein MAGIX (Magix).